The chain runs to 131 residues: F(420)H(2) dehydrogenase subunit O (131 aa).

The [2Fe-2S] cluster site is built by Cys-58, Cys-63, and Cys-66.

It belongs to the FpoO family. In terms of assembly, the FPO complex is composed of at least 13 different subunits. It depends on [2Fe-2S] cluster as a cofactor.

The enzyme catalyses methanophenazine + reduced coenzyme F420-(gamma-L-Glu)(n) = dihydromethanophenazine + oxidized coenzyme F420-(gamma-L-Glu)(n) + H(+). Component of the F(420)H(2) dehydrogenase (FPO complex) which is part of the energy-conserving F(420)H(2):heterodisulfide oxidoreductase system. The membrane-bound electron transfer system of the complex plays an important role in the metabolism of methylotrophic methanogens when the organisms grow on methanol or methylamines. Catalyzes the oxidation of methanophenazine to dihydromethanophenazine. It shuttles electrons from F(420)H(2), via FAD and iron-sulfur (Fe-S) centers, to methanophenazine (an electron carrier in the membrane). It couples the redox reaction to proton translocation (for every two electrons transferred, two hydrogen ions are translocated across the cytoplasmic membrane), and thus conserves the redox energy in a proton gradient. It also catalyzes the oxidation of F(420)H(2) with quinones such as 2,3-dimethyl-1,4-naphthoquinone, 2-methyl-1,4-naphthoquinone and tetramethyl-p-benzoquinone. The chain is F(420)H(2) dehydrogenase subunit O (fpoO) from Methanosarcina mazei (strain ATCC BAA-159 / DSM 3647 / Goe1 / Go1 / JCM 11833 / OCM 88) (Methanosarcina frisia).